We begin with the raw amino-acid sequence, 525 residues long: D-arabinono-1,4-lactone oxidase (525 aa).

The FAD-binding PCMH-type domain occupies 20–195 (IYSSRPEWYF…VGATVRVVPA (176 aa)). H58 is subject to Pros-8alpha-FAD histidine.

The protein belongs to the oxygen-dependent FAD-linked oxidoreductase family. The cofactor is FAD.

The protein resides in the mitochondrion membrane. It carries out the reaction D-arabinono-1,4-lactone + O2 = dehydro-D-arabinono-1,4-lactone + H2O2 + H(+). It functions in the pathway cofactor biosynthesis; D-erythroascorbate biosynthesis; dehydro-D-arabinono-1,4-lactone from D-arabinose: step 2/2. The chain is D-arabinono-1,4-lactone oxidase (ALO1) from Candida glabrata (strain ATCC 2001 / BCRC 20586 / JCM 3761 / NBRC 0622 / NRRL Y-65 / CBS 138) (Yeast).